Here is a 140-residue protein sequence, read N- to C-terminus: Large ribosomal subunit protein bL17 (140 aa).

Positions 119-133 (DPSAKGAADRARLEE) are enriched in basic and acidic residues. The interval 119–140 (DPSAKGAADRARLEEEGGMTEE) is disordered.

This sequence belongs to the bacterial ribosomal protein bL17 family. As to quaternary structure, part of the 50S ribosomal subunit. Contacts protein L32.

The chain is Large ribosomal subunit protein bL17 from Maricaulis maris (strain MCS10) (Caulobacter maris).